The primary structure comprises 461 residues: Na(+)/H(+) antiporter NhaA (461 aa).

The segment at 1 to 23 (MILSTQRLGRFMSPAPTPAPDAK) is disordered. 12 helical membrane-spanning segments follow: residues 48–68 (VGGALLVAAAVIALIWANSPV), 89–109 (LSLGAWAADGLLAIFFFLVGL), 127–147 (IVPVAAAAGGVLVPALIYAAV), 157–177 (GWAIPTATDIAFAVAVLAIIG), 186–206 (IFLLTLAVVDDLIAISIIAFF), 211–231 (IQAAPLLLALIPLALYAFLAQ), 236–256 (FFGAHFMAAWAILLPLGIVTW), 257–277 (ALVHASGIHATVAGVLLGFAV), 305–325 (ISAGVAVPIFAFFSAGVAVGG), 339–359 (IGIIMALVLGKPIGIMGTTWI), 374–394 (WIDVFGVSLLAGIGFTVSLLV), and 408–428 (HAKVGILAASLLAAILATVVL).

The protein belongs to the NhaA Na(+)/H(+) (TC 2.A.33) antiporter family.

It is found in the cell membrane. It catalyses the reaction Na(+)(in) + 2 H(+)(out) = Na(+)(out) + 2 H(+)(in). Functionally, na(+)/H(+) antiporter that extrudes sodium in exchange for external protons. The sequence is that of Na(+)/H(+) antiporter NhaA from Arthrobacter sp. (strain FB24).